Here is a 712-residue protein sequence, read N- to C-terminus: Nucleolin (712 aa).

A disordered region spans residues 1–305; that stretch reads MVKLAKAGKN…KKQKVEGTEP (305 aa). N6-acetyllysine occurs at positions 9, 15, and 16. Positions 24 to 43 are enriched in acidic residues; sequence VEEDSEDEEMSEDEEDDSSG. Residues serine 28, serine 34, serine 41, and serine 42 each carry the phosphoserine modification. Over residues 56–107 the composition is skewed to low complexity; that stretch reads AAATSAKKVVVSPTKKVAVATPAKKAAVTPGKKAAATPAKKTVTPAKAVTTP. Repeat unit 1 spans residues 58 to 65; the sequence is ATSAKKVV. The interval 58–135 is 8 X 8 AA tandem repeats of X-T-P-X-K-K-X-X; sequence ATSAKKVVVS…GAAIPAKGAK (78 aa). Serine 67 is subject to Phosphoserine. Residues threonine 69, threonine 76, threonine 84, and threonine 92 each carry the phosphothreonine modification. 3 consecutive repeat copies span residues 75-82, 83-90, and 91-98. At lysine 96 the chain carries N6-acetyllysine. Threonine 99 carries the phosphothreonine modification. The stretch at 99–104 is one 5; truncated repeat; sequence TPAKAV. Lysine 102 bears the N6-acetyllysine mark. Residues 105–112 form repeat 6; it reads TTPGKKGA. A Phosphothreonine modification is found at threonine 106. Lysine 109 is subject to N6-acetyllysine. Threonine 113 carries the post-translational modification Phosphothreonine. At lysine 116 the chain carries N6-acetyllysine. A run of 2 repeats spans residues 120–127 and 128–135. Threonine 121 bears the Phosphothreonine mark. The span at 122-137 shows a compositional bias: low complexity; it reads PGKKGAAIPAKGAKNG. Lysine 124 is modified (N6-acetyllysine). A phosphoserine mark is found at serine 145 and serine 153. Acidic residues predominate over residues 145–171; sequence SDEEEEDDSEEDEDDDEDEDEDEDEIE. A compositionally biased stretch (low complexity) spans 172 to 183; that stretch reads PAAMKAAAAAPA. Residues serine 184 and serine 206 each carry the phosphoserine modification. Acidic residues predominate over residues 184–211; sequence SEDEDDEDDEDDEDEDDDEEDDSEEEAM. Phosphothreonine is present on threonine 214. A compositionally biased stretch (acidic residues) spans 234 to 274; sequence EDEDEEEDDEDEDDDDDDDDDDEDDEDEDDEEEEEEEEEEP. Over residues 275–302 the composition is skewed to basic and acidic residues; the sequence is VKEAPGKRKKEMAKQKAAPEAKKQKVEG. Lysine 299 is covalently cross-linked (Glycyl lysine isopeptide (Lys-Gly) (interchain with G-Cter in SUMO1); alternate). Lysine 299 is covalently cross-linked (Glycyl lysine isopeptide (Lys-Gly) (interchain with G-Cter in SUMO2); alternate). A Phosphothreonine modification is found at threonine 303. RRM domains lie at 309-385 and 395-468; these read FNLF…KPKG and RTLL…YTGE. Lysine 320 is modified (N6-acetyllysine). Residue lysine 326 forms a Glycyl lysine isopeptide (Lys-Gly) (interchain with G-Cter in SUMO1); alternate linkage. A Glycyl lysine isopeptide (Lys-Gly) (interchain with G-Cter in SUMO2); alternate cross-link involves residue lysine 326. An N6-acetyllysine modification is found at lysine 350. Phosphoserine is present on serine 358. Threonine 369 is subject to Phosphothreonine. Lysine 372 participates in a covalent cross-link: Glycyl lysine isopeptide (Lys-Gly) (interchain with G-Cter in SUMO2). Lysine 379 participates in a covalent cross-link: Glycyl lysine isopeptide (Lys-Gly) (interchain with G-Cter in SUMO2); alternate. The residue at position 379 (lysine 379) is an N6-acetyllysine; alternate. Lysine 400 and lysine 405 each carry N6-acetyllysine. Residue threonine 407 is modified to Phosphothreonine. An N6-acetyllysine mark is found at lysine 429 and lysine 446. Residues serine 460 and serine 462 each carry the phosphoserine modification. 2 positions are modified to N6-acetyllysine: lysine 469 and lysine 479. An RRM 3 domain is found at 488–562; sequence KTLVLSNLSY…RAIRLELQGP (75 aa). Lysine 515 is covalently cross-linked (Glycyl lysine isopeptide (Lys-Gly) (interchain with G-Cter in SUMO2); alternate). At lysine 515 the chain carries N6-acetyllysine; alternate. The residue at position 523 (lysine 523) is an N6-acetyllysine. At serine 565 the chain carries Phosphoserine. Lysine 574 bears the N6-acetyllysine mark. One can recognise an RRM 4 domain in the interval 574 to 649; sequence KTLFVKGLSE…NKVTLDWAKP (76 aa). Residue lysine 579 forms a Glycyl lysine isopeptide (Lys-Gly) (interchain with G-Cter in SUMO2); alternate linkage. Lysine 579 is subject to N6-acetyllysine; alternate. Residue serine 582 is modified to Phosphoserine. A Glycyl lysine isopeptide (Lys-Gly) (interchain with G-Cter in SUMO1); alternate cross-link involves residue lysine 591. A Glycyl lysine isopeptide (Lys-Gly) (interchain with G-Cter in SUMO2); alternate cross-link involves residue lysine 591. Phosphoserine occurs at positions 593 and 621. Lysine 626 is covalently cross-linked (Glycyl lysine isopeptide (Lys-Gly) (interchain with G-Cter in SUMO2)). Positions 642 to 712 are disordered; sequence VTLDWAKPKG…KPQGKKTKFE (71 aa). N6-acetyllysine is present on lysine 648. The span at 652-698 shows a compositional bias: gly residues; that stretch reads EGGFGGRGGGRGGFGGRGGGRGGRGGFGGRGRGGFGGRGGFRGGRGG. An asymmetric dimethylarginine mark is found at arginine 658, arginine 662, arginine 668, arginine 672, arginine 675, arginine 681, arginine 683, arginine 689, and arginine 693. The residue at position 696 (arginine 696) is an Asymmetric dimethylarginine; alternate. Arginine 696 is modified (omega-N-methylarginine; alternate). Basic and acidic residues predominate over residues 699–712; it reads GGDHKPQGKKTKFE.

Identified in a IGF2BP1-dependent mRNP granule complex containing untranslated mRNAs. Component of the SWAP complex that consists of NPM1, NCL/nucleolin, PARP1 and SWAP70. Component of a complex which is at least composed of HTATSF1/Tat-SF1, the P-TEFb complex components CDK9 and CCNT1, RNA polymerase II, SUPT5H, and NCL/nucleolin. Interacts with AICDA. Interacts with APTX. Interacts with C1QBP. Interacts with ERBB4. Interacts (via C-terminus) with FMR1 isoform 6 (via N-terminus). Interacts with GZF1; this interaction is important for nucleolar localization of GZF1. Interacts with NSUN2. Interacts with NVL. Interacts (via N-terminus domain) with SETX. Interacts (via RRM1 and C-terminal RRM4/Arg/Gly-rich domains) with TERT; the interaction is important for nucleolar localization of TERT. Interacts with WDR46. Interacts with ZFP36. Interacts with LRRC34. Interacts with RRP1B. Interacts with HNRNPU; this interaction occurs during mitosis. Interacts with RIOK1; RIOK1 recruits NCL to the PRMT5 for symmetrically methylation. Interacts with ZBTB7B. Interacts with MDK; this interaction promotes NCL clustering and lateral movements of this complex into lipid rafts leading to MDK internalization. Interacts with HDGF. Interacts with ALKBH2. Interacts with IGFBP5; this interaction is necessary for IGFBP5 localization to the nucleus. Interacts with DDX24 (when ubiquitinated); this interaction may be important during ribosome biogenesis. Some glutamate residues are glycylated by TTLL8. This modification occurs exclusively on glutamate residues and results in a glycine chain on the gamma-carboxyl group. Post-translationally, symmetrically methylated by PRMT5.

It is found in the nucleus. The protein localises to the nucleolus. It localises to the cytoplasm. Functionally, nucleolin is the major nucleolar protein of growing eukaryotic cells. It is found associated with intranucleolar chromatin and pre-ribosomal particles. It induces chromatin decondensation by binding to histone H1. It is thought to play a role in pre-rRNA transcription and ribosome assembly. May play a role in the process of transcriptional elongation. Binds RNA oligonucleotides with 5'-UUAGGG-3' repeats more tightly than the telomeric single-stranded DNA 5'-TTAGGG-3' repeats. The polypeptide is Nucleolin (NCL) (Pongo abelii (Sumatran orangutan)).